The primary structure comprises 703 residues: Neoverrucotoxin subunit alpha (703 aa).

The residue at position 2 (serine 2) is an N-acetylserine. The B30.2/SPRY domain maps to 508–703; the sequence is PRMPFVQGYK…RFDHGTVRLL (196 aa).

Belongs to the SNTX/VTX toxin family. In terms of assembly, heterodimer of alpha and beta subunits. In terms of processing, not glycosylated. Post-translationally, four intrachain disulfide linkages are present in the heterodimer. No interchain disulfide bound links the two subunits. In terms of tissue distribution, expressed by the venom gland.

It localises to the secreted. Has hemolytic and lethal activities. Its hemolytic activity is inhibited by anionic lipids, especially potently by cardiolipin. The polypeptide is Neoverrucotoxin subunit alpha (Synanceia verrucosa (Reef stonefish)).